Here is a 54-residue protein sequence, read N- to C-terminus: uncharacterized protein (54 aa).

Positions 1–13 (MLLCFHMCQRIMW) are cleaved as a signal peptide.

The protein localises to the secreted. This is an uncharacterized protein from Saccharomyces cerevisiae (strain ATCC 204508 / S288c) (Baker's yeast).